A 1217-amino-acid polypeptide reads, in one-letter code: Inactive disease resistance protein RPS4 (1217 aa).

One can recognise a TIR domain in the interval 14–175 (PQHQVFINFR…EIVKAVKTAL (162 aa)). The active site involves Glu-88. The NB-ARC domain maps to 211–472 (EQRLKDLEEK…FRSQDKDYVE (262 aa)). 11 LRR repeats span residues 260-285 (HALI…LLGE), 436-459 (PNIV…AFLD), 614-636 (LKEV…DFNP), 637-659 (INLV…DKDT), 682-706 (AEKL…MKKM), 708-728 (MLAF…EMNL), 729-749 (ISLK…PLIS), 750-774 (DNIE…KLQR), 796-818 (LKAL…EIDI), 819-842 (SFLN…SVQY), and 861-887 (LSQL…NLQC). Residues 1162 to 1195 (TEGVDGRVKKKKKTRMDNGRPKKKQRSGRDDNQT) form a disordered region. The short motif at 1170–1177 (KKKKKTRM) is the Nuclear localization signal element.

As to quaternary structure, interacts with EDS1.

Its subcellular location is the nucleus. The catalysed reaction is NAD(+) + H2O = ADP-D-ribose + nicotinamide + H(+). The sequence is that of Inactive disease resistance protein RPS4 (RPS4) from Arabidopsis thaliana (Mouse-ear cress).